The sequence spans 433 residues: MPTAVIESLDHEGRGIARVEGKAVFIEGGLPGETVEYRVLRSKPNYEQAEATRIVRRSALRVAPRCPHFGVCGGCSMQHLDTLAQAATKQRVLEDALWRIGKVKPGIIYSAIQGPAWGYRYRARLGVRLVPAKGGVLIGFHERRSSYIADLGVCPVLPAHVSALLPALKVLVASLSIADRLPQIEVAVSEATTVLVFRNLLALKKADEAQLRSFAETHGVQVWLQPEGPDSIVPLHPRSGPGLTYTLPEFDVALDFRATDFTQVNVHINRLLIRRAMQLLQPAPGERIADLFCGLGNFSLPIARRGATVVGVEGSEALVARALENARRNGLDSRTEFHAANLFDATEDSLAALGPLDKLLIDPPREGAIAVVKAVGPAQQPARIVYVSCNPATLARDAAVLVHEKGYVLRGAGIANMFPQTSHVESIALFERP.

A TRAM domain is found at 1–53 (MPTAVIESLDHEGRGIARVEGKAVFIEGGLPGETVEYRVLRSKPNYEQAEATR). Positions 66, 72, 75, and 154 each coordinate [4Fe-4S] cluster. Residues glutamine 263, phenylalanine 292, asparagine 297, glutamate 313, asparagine 341, and aspartate 362 each coordinate S-adenosyl-L-methionine. The Nucleophile role is filled by cysteine 389.

The protein belongs to the class I-like SAM-binding methyltransferase superfamily. RNA M5U methyltransferase family. RlmD subfamily.

It carries out the reaction uridine(1939) in 23S rRNA + S-adenosyl-L-methionine = 5-methyluridine(1939) in 23S rRNA + S-adenosyl-L-homocysteine + H(+). In terms of biological role, catalyzes the formation of 5-methyl-uridine at position 1939 (m5U1939) in 23S rRNA. The sequence is that of 23S rRNA (uracil(1939)-C(5))-methyltransferase RlmD from Azoarcus sp. (strain BH72).